The chain runs to 447 residues: Probable aspartic protease At2g35615 (447 aa).

An N-terminal signal peptide occupies residues 1 to 20 (MATQILLCFFLFFSVTLSSS). Residue N25 is glycosylated (N-linked (GlcNAc...) asparagine). Residues 85–439 (FFMSITIGTP…DLETRTVSFQ (355 aa)) form the Peptidase A1 domain. The active site involves D103. N-linked (GlcNAc...) asparagine glycosylation occurs at N251. D326 is a catalytic residue.

This sequence belongs to the peptidase A1 family.

The protein localises to the secreted. This Arabidopsis thaliana (Mouse-ear cress) protein is Probable aspartic protease At2g35615.